The following is a 242-amino-acid chain: Peptidase E (242 aa).

Active-site charge relay system residues include serine 123, aspartate 138, and histidine 160.

The protein belongs to the peptidase S51 family.

It localises to the cytoplasm. It catalyses the reaction Dipeptidase E catalyzes the hydrolysis of dipeptides Asp-|-Xaa. It does not act on peptides with N-terminal Glu, Asn or Gln, nor does it cleave isoaspartyl peptides.. Functionally, hydrolyzes dipeptides containing N-terminal aspartate residues. May play a role in allowing the cell to use peptide aspartate to spare carbon otherwise required for the synthesis of the aspartate family of amino acids. This is Peptidase E from Nostoc sp. (strain PCC 7120 / SAG 25.82 / UTEX 2576).